A 562-amino-acid polypeptide reads, in one-letter code: Glucose-6-phosphate isomerase (562 aa).

Glu-370 (proton donor) is an active-site residue. Catalysis depends on residues His-401 and Lys-526.

This sequence belongs to the GPI family.

The protein resides in the cytoplasm. It catalyses the reaction alpha-D-glucose 6-phosphate = beta-D-fructose 6-phosphate. It functions in the pathway carbohydrate biosynthesis; gluconeogenesis. Its pathway is carbohydrate degradation; glycolysis; D-glyceraldehyde 3-phosphate and glycerone phosphate from D-glucose: step 2/4. Its function is as follows. Catalyzes the reversible isomerization of glucose-6-phosphate to fructose-6-phosphate. In Deinococcus geothermalis (strain DSM 11300 / CIP 105573 / AG-3a), this protein is Glucose-6-phosphate isomerase.